The primary structure comprises 139 residues: Putative pre-16S rRNA nuclease (139 aa).

This sequence belongs to the YqgF nuclease family.

It localises to the cytoplasm. Could be a nuclease involved in processing of the 5'-end of pre-16S rRNA. The polypeptide is Putative pre-16S rRNA nuclease (Streptococcus sanguinis (strain SK36)).